The chain runs to 429 residues: Phosphoribosylamine--glycine ligase (429 aa).

Positions 109-316 (KDFLARHKIP…LVELCLAACE (208 aa)) constitute an ATP-grasp domain. Position 135-196 (135-196 (LREKGAPIVI…EEFLDGEEAS (62 aa))) interacts with ATP. Residues 212–236 (SQDHKRVGDKDTGPNTGGMGAYSPA) form a disordered region. Positions 213–223 (QDHKRVGDKDT) are enriched in basic and acidic residues. Mg(2+) contacts are provided by Glu286 and Asn288.

The protein belongs to the GARS family. As to quaternary structure, monomer. Mg(2+) is required as a cofactor. Requires Mn(2+) as cofactor.

It catalyses the reaction 5-phospho-beta-D-ribosylamine + glycine + ATP = N(1)-(5-phospho-beta-D-ribosyl)glycinamide + ADP + phosphate + H(+). Its pathway is purine metabolism; IMP biosynthesis via de novo pathway; N(1)-(5-phospho-D-ribosyl)glycinamide from 5-phospho-alpha-D-ribose 1-diphosphate: step 2/2. Functionally, catalyzes the reversible conversion of phosphoribosylamine to glycinamide ribonucleotide, an enzymatic step in purine biosynthesis pathway. The polypeptide is Phosphoribosylamine--glycine ligase (purD) (Escherichia coli (strain K12)).